A 323-amino-acid chain; its full sequence is Peroxisome biogenesis protein 20 (323 aa).

Cys-8 participates in a covalent cross-link: Glycyl cysteine thioester (Cys-Gly) (interchain with G-Cter in ubiquitin). Residue Lys-19 forms a Glycyl lysine isopeptide (Lys-Gly) (interchain with G-Cter in ubiquitin) linkage. 3 consecutive short sequence motifs (wxxxF/Y motif) follow at residues 89–93, 102–105, and 141–145; these read WSSEF, WVED, and WTQEF.

This sequence belongs to the peroxisomal targeting signal receptor family. In terms of assembly, interacts (via WxxxF/Y and LVxEF motifs) with PEX14; promoting translocation through the PEX13-PEX14 docking complex. Interacts with PEX7. Monoubiquitinated at Cys-8 by PEX2 during PEX20 passage through the PEX2-PEX10-PEX12 retrotranslocation channel: monoubiquitination acts as a signal for PEX20 extraction and is required for proper export from peroxisomes and recycling. When PEX5 recycling is compromised, polyubiquitinated at Lys-19 by PEX10 during its passage through the retrotranslocation channel, leading to its degradation.

The protein resides in the cytoplasm. Its subcellular location is the cytosol. It localises to the peroxisome matrix. Coreceptor required for the peroxisomal import of proteins containing a C-terminal PTS2-type peroxisomal targeting signal, such as 3-oxoacyl-CoA thiolase. Acts via its interaction with PEX7, promoting association between PEX7 bound to cargo proteins and the PEX13-PEX14 docking complex. PEX20 along with PEX7 and PTS2-containing cargo proteins are tranlocated into peroxisomes by passing through the PEX13-PEX14 docking complex. PEX20 coreceptor is then retrotranslocated into the cytosol, leading to release of bound cargo in the peroxisome matrix, and reset for a subsequent peroxisome import cycle. Also mediates peroxisomal import of proteins that do not contain PTS1- or PTS2-type peroxisomal targeting signals, such as acyl-CoA oxidases (Aox) izozymes. Import of acyl-CoA oxidases (Aox) izozymes is independent of PEX7. Required for PEX7 ubiquitination. This chain is Peroxisome biogenesis protein 20, found in Komagataella pastoris (Yeast).